Reading from the N-terminus, the 266-residue chain is Protein crossbronx-like (266 aa).

The UBC core domain maps to Lys15–Asn178. A disordered region spans residues Ser226–Leu266. Residues Gln245 to Leu266 show a composition bias toward basic and acidic residues.

It belongs to the ubiquitin-conjugating enzyme family. FTS subfamily.

The sequence is that of Protein crossbronx-like from Drosophila sechellia (Fruit fly).